We begin with the raw amino-acid sequence, 373 residues long: Outer membrane protein C (373 aa).

A signal peptide spans 1-21 (MKVKVLSLLVPALLVAGAANA). Beta stranded transmembrane passes span 34 to 42 (LYGKVDGLH), 54 to 63 (QTYMRLGFKG), 74 to 84 (YGQWEYQIQGN), 92 to 101 (SWTRVAFAGL), and 107 to 115 (GSFDYGRNY). The tract at residues 116–133 (GVVYDVTSWTDVLPEFGG) is loop L3; may constrict the pore. 11 beta stranded membrane passes run 142 to 154 (MQQR…TYRS), 164 to 171 (LNFAVQYQ), 197 to 203 (VGGSITY), 208 to 215 (FGIGAAVS), 244 to 250 (YTGGLKY), 255 to 262 (IYLAAQYT), 272 to 288 (NLGW…VAQY), 294 to 301 (LRPSLAYL), 325 to 332 (VDVGATYY), 337 to 344 (MSTYVDYK), and 365 to 372 (VALGLVYQ).

This sequence belongs to the Gram-negative porin family. In terms of assembly, homotrimer. Forms mixed heterotrimers with OmpF and with PhoE; other mixed heterotrimers are also probable. (Microbial infection) Upon infection with phage Sf6 associates with the mature bacteriophage capsid. Was originally suggested to be within the bacteriophage capsid. This has been disproven.

The protein localises to the cell outer membrane. It localises to the extracellular vesicle. In terms of biological role, forms pores that allow passive diffusion of small molecules across the outer membrane. (Microbial infection) Serves as a less-preferential secondary receptor during phage Sf6 infection; infection requires both lipopolysaccharide (LPS) and (in the absence of OmpA) OmpC can serve as the secondary receptor. The polypeptide is Outer membrane protein C (ompC) (Shigella flexneri).